The sequence spans 124 residues: Fluoride-specific ion channel FluC (124 aa).

The next 4 membrane-spanning stretches (helical) occupy residues 3-23 (IIAIAVGAAIGANLRYSLSIW), 34-54 (YGTLIVNVIGSFAIGFVLVLA), 66-86 (LLIVTGLLGGFTTFSSLSFET), and 100-120 (LYVLSSFGLGIAGVFLGAGVA). Positions 74 and 77 each coordinate Na(+).

This sequence belongs to the fluoride channel Fluc/FEX (TC 1.A.43) family.

The protein localises to the cell membrane. The catalysed reaction is fluoride(in) = fluoride(out). With respect to regulation, na(+) is not transported, but it plays an essential structural role and its presence is essential for fluoride channel function. Fluoride-specific ion channel. Important for reducing fluoride concentration in the cell, thus reducing its toxicity. This chain is Fluoride-specific ion channel FluC, found in Roseiflexus sp. (strain RS-1).